A 503-amino-acid polypeptide reads, in one-letter code: ESX-5 secretion system protein EccD5 (503 aa).

10 helical membrane passes run Val137–Val157, Leu169–Leu189, Val200–Pro220, Val224–Leu244, Arg250–Ser270, Met272–Met292, Phe359–Cys379, Ile414–Val434, Ile443–Pro463, and Tyr480–Ile500.

It belongs to the EccD/Snm4 family. As to quaternary structure, part of the ESX-5 / type VII secretion system (T7SS), which is composed of cytosolic and membrane components. The ESX-5 membrane complex is composed of EccB5, EccC5, EccD5 and EccE5.

The protein localises to the cell inner membrane. Its function is as follows. Part of the ESX-5 specialized secretion system, which is responsible for the secretion of EsxN and a number of PE_PGRS and PPE proteins. This component is essential for ESX-5 complex stability and secretion. This is ESX-5 secretion system protein EccD5 from Mycobacterium marinum (strain ATCC BAA-535 / M).